The chain runs to 562 residues: Arginine--tRNA ligase 1 (562 aa).

Residues 122–132 carry the 'HIGH' region motif; it reads PNIAKPFSMGH.

This sequence belongs to the class-I aminoacyl-tRNA synthetase family. As to quaternary structure, monomer.

The protein resides in the cytoplasm. It catalyses the reaction tRNA(Arg) + L-arginine + ATP = L-arginyl-tRNA(Arg) + AMP + diphosphate. The protein is Arginine--tRNA ligase 1 of Bacillus thuringiensis subsp. konkukian (strain 97-27).